The sequence spans 376 residues: MAQKQKCVAMLLAGGKGSRLSALTKNLAKPAVPFGGKYRIIDFTLSNCANSGIETVGILTQYQPLELHNYIGIGNAWDLDRVSGGVTVLPPYAESSGVKWYTGTASAIYQNLNYLSQYEPEYVLILSGDHIYKMDYSKMLDYHIEKEADVSISVIEVPWDEASRFGIMNTNEEMEIVEFEEKPQFPRSNLASMGIYIFNWAILKEYLEMDARNPESSNDFGKDVLPLLLDEGKKLMAYPFEGYWKDVGTVKSLWEANMDLLRDETSLNLNDRDWRIYSVNPNEPPQYIAEKARVEESLINEGCVIEGDVKHSVLFQGVTVEEGSMVIDSVVMPGAKIGKNVVIERAIVGSEMVIEDGTIIRPEKNVDDVVLIAEGK.

Residues Y101, G166, 181-182 (EK), and S192 contribute to the alpha-D-glucose 1-phosphate site.

Belongs to the bacterial/plant glucose-1-phosphate adenylyltransferase family. In terms of assembly, homotetramer.

The enzyme catalyses alpha-D-glucose 1-phosphate + ATP + H(+) = ADP-alpha-D-glucose + diphosphate. Its pathway is glycan biosynthesis; glycogen biosynthesis. Involved in the biosynthesis of ADP-glucose, a building block required for the elongation reactions to produce glycogen. Catalyzes the reaction between ATP and alpha-D-glucose 1-phosphate (G1P) to produce pyrophosphate and ADP-Glc. This Bacillus cereus (strain Q1) protein is Glucose-1-phosphate adenylyltransferase.